The following is a 130-amino-acid chain: Small ribosomal subunit protein uS11c (130 aa).

This sequence belongs to the universal ribosomal protein uS11 family. As to quaternary structure, part of the 30S ribosomal subunit.

It is found in the plastid. It localises to the chloroplast. The sequence is that of Small ribosomal subunit protein uS11c from Chlorella vulgaris (Green alga).